The following is a 42-amino-acid chain: uncharacterized protein (42 aa).

A helical membrane pass occupies residues 10–30; sequence VANWVTVILMALAGYAVLALA.

It is found in the host membrane. This is an uncharacterized protein from Acinetobacter calcoaceticus (Arthrobacter siderocapsulatus).